Here is a 322-residue protein sequence, read N- to C-terminus: Probable arabinan endo-1,5-alpha-L-arabinosidase A (322 aa).

The N-terminal stretch at 1 to 19 (MYLPTLAASASLLVGVAHG) is a signal peptide. D34 serves as the catalytic Proton acceptor. Catalysis depends on E201, which acts as the Proton donor.

Belongs to the glycosyl hydrolase 43 family.

The protein localises to the secreted. The catalysed reaction is Endohydrolysis of (1-&gt;5)-alpha-arabinofuranosidic linkages in (1-&gt;5)-arabinans.. Its pathway is glycan metabolism; L-arabinan degradation. In terms of biological role, endo-1,5-alpha-L-arabinanase involved in degradation of pectin. Its preferred substrate is linear 1,5-alpha-L-arabinan. The chain is Probable arabinan endo-1,5-alpha-L-arabinosidase A (abnA) from Emericella nidulans (strain FGSC A4 / ATCC 38163 / CBS 112.46 / NRRL 194 / M139) (Aspergillus nidulans).